Reading from the N-terminus, the 156-residue chain is Small ribosomal subunit protein uS7 (156 aa).

Belongs to the universal ribosomal protein uS7 family. In terms of assembly, part of the 30S ribosomal subunit. Contacts proteins S9 and S11.

One of the primary rRNA binding proteins, it binds directly to 16S rRNA where it nucleates assembly of the head domain of the 30S subunit. Is located at the subunit interface close to the decoding center, probably blocks exit of the E-site tRNA. This Salmonella agona (strain SL483) protein is Small ribosomal subunit protein uS7.